We begin with the raw amino-acid sequence, 370 residues long: Phospho-N-acetylmuramoyl-pentapeptide-transferase (370 aa).

11 helical membrane passes run 21–41, 46–66, 92–112, 117–137, 151–171, 181–201, 217–237, 243–263, 270–290, 298–318, and 349–369; these read PTSI…DLFI, LLVP…WGII, PSMG…LFAL, FSKQ…IGLI, LSVK…LVLI, ILIF…IALF, DGLA…ELII, NYAI…FLIF, VFMG…VALL, LIMG…VGVF, and TIIV…AIML.

The protein belongs to the glycosyltransferase 4 family. MraY subfamily. Mg(2+) is required as a cofactor.

Its subcellular location is the cell inner membrane. The catalysed reaction is UDP-N-acetyl-alpha-D-muramoyl-L-alanyl-gamma-D-glutamyl-meso-2,6-diaminopimeloyl-D-alanyl-D-alanine + di-trans,octa-cis-undecaprenyl phosphate = di-trans,octa-cis-undecaprenyl diphospho-N-acetyl-alpha-D-muramoyl-L-alanyl-D-glutamyl-meso-2,6-diaminopimeloyl-D-alanyl-D-alanine + UMP. It participates in cell wall biogenesis; peptidoglycan biosynthesis. In terms of biological role, catalyzes the initial step of the lipid cycle reactions in the biosynthesis of the cell wall peptidoglycan: transfers peptidoglycan precursor phospho-MurNAc-pentapeptide from UDP-MurNAc-pentapeptide onto the lipid carrier undecaprenyl phosphate, yielding undecaprenyl-pyrophosphoryl-MurNAc-pentapeptide, known as lipid I. This chain is Phospho-N-acetylmuramoyl-pentapeptide-transferase, found in Prochlorococcus marinus (strain SARG / CCMP1375 / SS120).